The chain runs to 341 residues: Trans-3-hydroxy-L-proline dehydratase (341 aa).

Catalysis depends on Ser-90, which acts as the Proton acceptor. Residues Gly-91–Ser-92, Asp-252, and Gly-257–Thr-258 contribute to the substrate site.

The protein belongs to the proline racemase family.

It carries out the reaction trans-3-hydroxy-L-proline = 1-pyrroline-2-carboxylate + H2O. Functionally, catalyzes the dehydration of trans-3-hydroxy-L-proline (t3LHyp) to Delta(1)-pyrroline-2-carboxylate (Pyr2C). May be involved in a degradation pathway of t3LHyp, which would allow L.aggregata to grow on t3LHyp as a sole carbon source. Displays neither proline racemase activity nor 4-hydroxyproline 2-epimerase activity. The polypeptide is Trans-3-hydroxy-L-proline dehydratase (Roseibium aggregatum (strain ATCC 25650 / DSM 13394 / JCM 20685 / NBRC 16684 / NCIMB 2208 / IAM 12614 / B1) (Stappia aggregata)).